We begin with the raw amino-acid sequence, 443 residues long: DNA primase DnaG (443 aa).

The Toprim domain maps to Asp169–Tyr243. Mg(2+) contacts are provided by Glu175, Asp217, and Asp219.

The protein belongs to the archaeal DnaG primase family. Forms a ternary complex with MCM helicase and DNA. Requires Mg(2+) as cofactor.

It carries out the reaction ssDNA + n NTP = ssDNA/pppN(pN)n-1 hybrid + (n-1) diphosphate.. RNA polymerase that catalyzes the synthesis of short RNA molecules used as primers for DNA polymerase during DNA replication. This is DNA primase DnaG from Methanococcus vannielii (strain ATCC 35089 / DSM 1224 / JCM 13029 / OCM 148 / SB).